Here is a 365-residue protein sequence, read N- to C-terminus: Hematopoietic SH2 domain-containing protein homolog (365 aa).

The region spanning 34 to 125 is the SH2 domain; the sequence is WFHGIISRKA…PYNELLTVAC (92 aa). Disordered stretches follow at residues 199–278 and 335–365; these read QSTD…QQKP and AEHP…APGY. Over residues 257 to 277 the composition is skewed to polar residues; that stretch reads QQITPNTPNEGRTQQKNQQQK.

In terms of biological role, may be an adapter protein involved in tyrosine kinase signaling. The polypeptide is Hematopoietic SH2 domain-containing protein homolog (hsh2d) (Danio rerio (Zebrafish)).